Here is a 740-residue protein sequence, read N- to C-terminus: ATP-dependent RNA helicase DDX1 (740 aa).

Positions 1-295 are necessary for interaction with HNRNPK; it reads MAAFSEMGVM…APKALIVEPS (295 aa). Positions 1 to 448 are interaction with dsRNA; it reads MAAFSEMGVM…DTVHHVVVPV (448 aa). The segment at 1 to 525 is necessary for interaction with RELA; it reads MAAFSEMGVM…KIDCDNLEQY (525 aa). In terms of domain architecture, Helicase ATP-binding spans 2-428; that stretch reads AAFSEMGVMP…SEKIMHFPTW (427 aa). 46–53 contributes to the ATP binding site; the sequence is AETGSGKT. The region spanning 70–247 is the B30.2/SPRY domain; that stretch reads DQQEGKKGKA…LKFNFGEEEF (178 aa). Residues lysine 239 and lysine 268 each carry the N6-acetyllysine modification. At lysine 281 the chain carries N6-acetyllysine; alternate. Residue lysine 281 forms a Glycyl lysine isopeptide (Lys-Gly) (interchain with G-Cter in SUMO2); alternate linkage. Residues 370–373 carry the DEAD box motif; it reads DEAD. The residue at position 481 (serine 481) is a Phosphoserine. The Helicase C-terminal domain occupies 493 to 681; that stretch reads KGEYAVRAIK…QVEPDIKVPV (189 aa). Positions 525 to 740 are necessary for interaction with HNRNPK; sequence YFMQQGGGPD…YLPNQLFRTF (216 aa).

It belongs to the DEAD box helicase family. DDX1 subfamily. In terms of assembly, found in a multi-helicase-TICAM1 complex at least composed of DHX36, DDX1, DDX21 and TICAM1; this complex exists in resting cells with or without poly(I:C) RNA ligand stimulation. Interacts with DHX36. Interacts (via B30.2/SPRY domain) with DDX21 (via N-terminus); this interaction serves as bridges to TICAM1. Interacts with FAM98A (via N- and C-terminus). Interacts with PHF5A (via C-terminus). Interacts with MBNL1. Interacts with CSTF2. Interacts with HNRNPK. Interacts with ATM. Interacts with RELA (via C-terminus). Component of the tRNA-splicing ligase complex. Interacts with PQBP1. Interacts with ERCC6. Phosphorylated by ATM kinase; phosphorylation is increased in response to ionizing radiation (IR).

It is found in the nucleus. It localises to the cytoplasm. The protein localises to the cytoplasmic granule. Its subcellular location is the cytosol. The protein resides in the mitochondrion. The catalysed reaction is ATP + H2O = ADP + phosphate + H(+). Acts as an ATP-dependent RNA helicase, able to unwind both RNA-RNA and RNA-DNA duplexes. Possesses 5' single-stranded RNA overhang nuclease activity. Possesses ATPase activity on various RNA, but not DNA polynucleotides. May play a role in RNA clearance at DNA double-strand breaks (DSBs), thereby facilitating the template-guided repair of transcriptionally active regions of the genome. Together with RELA, acts as a coactivator to enhance NF-kappa-B-mediated transcriptional activation. Acts as a positive transcriptional regulator of cyclin CCND2 expression. Binds to the cyclin CCND2 promoter region. Associates with chromatin at the NF-kappa-B promoter region via association with RELA. Binds to poly(A) RNA. May be involved in 3'-end cleavage and polyadenylation of pre-mRNAs. Component of the tRNA-splicing ligase complex required to facilitate the enzymatic turnover of catalytic subunit RTCB: together with archease (ZBTB8OS), acts by facilitating the guanylylation of RTCB, a key intermediate step in tRNA ligation. Component of a multi-helicase-TICAM1 complex that acts as a cytoplasmic sensor of viral double-stranded RNA (dsRNA) and plays a role in the activation of a cascade of antiviral responses including the induction of pro-inflammatory cytokines via the adapter molecule TICAM1. Specifically binds (via helicase ATP-binding domain) on both short and long poly(I:C) dsRNA. This Bos taurus (Bovine) protein is ATP-dependent RNA helicase DDX1 (DDX1).